A 548-amino-acid polypeptide reads, in one-letter code: Glycosyl hydrolase family 109 protein 3 (548 aa).

The signal sequence occupies residues 1–21 (MKLKKLLLSVLMLLSISGLQA). Residues 71–72 (MR), Asp93, 141–144 (WNHH), 161–162 (EV), and Asn190 each bind NAD(+). Tyr219 lines the substrate pocket. 240-244 (DNLHW) contributes to the NAD(+) binding site. Substrate-binding positions include Arg245, 257 to 260 (YATH), and Tyr335. Tyr257 is a binding site for NAD(+).

It belongs to the Gfo/Idh/MocA family. Glycosyl hydrolase 109 subfamily. NAD(+) serves as cofactor.

Its function is as follows. Glycosidase. In Phocaeicola vulgatus (strain ATCC 8482 / DSM 1447 / JCM 5826 / CCUG 4940 / NBRC 14291 / NCTC 11154) (Bacteroides vulgatus), this protein is Glycosyl hydrolase family 109 protein 3.